The following is a 193-amino-acid chain: Transcriptional repressor NrdR (193 aa).

A zinc finger lies at 3-34 (CPYCGGLDTQVKDSRPSEDASAIRRRRICPDC). In terms of domain architecture, ATP-cone spans 49–139 (LTVVKRSGRK…VYKNFREAKD (91 aa)). The interval 150–193 (DQQDGAVPQAEADRPIGAGPPSEAAQPAAGEGGDAPMRRARSRA) is disordered.

It belongs to the NrdR family. The cofactor is Zn(2+).

Its function is as follows. Negatively regulates transcription of bacterial ribonucleotide reductase nrd genes and operons by binding to NrdR-boxes. The polypeptide is Transcriptional repressor NrdR (Methylobacterium nodulans (strain LMG 21967 / CNCM I-2342 / ORS 2060)).